The primary structure comprises 329 residues: Malate dehydrogenase (329 aa).

NAD(+) is bound at residue 12-18 (GAAGQIG). Arginine 93 and arginine 99 together coordinate substrate. Residues asparagine 106, glutamine 113, and 130 to 132 (TGN) contribute to the NAD(+) site. Substrate is bound by residues asparagine 132 and arginine 163. The Proton acceptor role is filled by histidine 188.

It belongs to the LDH/MDH superfamily. MDH type 2 family.

It carries out the reaction (S)-malate + NAD(+) = oxaloacetate + NADH + H(+). In terms of biological role, catalyzes the reversible oxidation of malate to oxaloacetate. The sequence is that of Malate dehydrogenase from Mycobacterium bovis (strain ATCC BAA-935 / AF2122/97).